The following is a 55-amino-acid chain: Large ribosomal subunit protein bL33 (55 aa).

Belongs to the bacterial ribosomal protein bL33 family.

This chain is Large ribosomal subunit protein bL33, found in Kocuria rhizophila (strain ATCC 9341 / DSM 348 / NBRC 103217 / DC2201).